Here is a 379-residue protein sequence, read N- to C-terminus: UDP-4-amino-4-deoxy-L-arabinose--oxoglutarate aminotransferase (379 aa).

The residue at position 182 (K182) is an N6-(pyridoxal phosphate)lysine.

It belongs to the DegT/DnrJ/EryC1 family. ArnB subfamily. In terms of assembly, homodimer. Pyridoxal 5'-phosphate serves as cofactor.

The catalysed reaction is UDP-4-amino-4-deoxy-beta-L-arabinose + 2-oxoglutarate = UDP-beta-L-threo-pentopyranos-4-ulose + L-glutamate. The protein operates within nucleotide-sugar biosynthesis; UDP-4-deoxy-4-formamido-beta-L-arabinose biosynthesis; UDP-4-deoxy-4-formamido-beta-L-arabinose from UDP-alpha-D-glucuronate: step 2/3. It functions in the pathway bacterial outer membrane biogenesis; lipopolysaccharide biosynthesis. Functionally, catalyzes the conversion of UDP-4-keto-arabinose (UDP-Ara4O) to UDP-4-amino-4-deoxy-L-arabinose (UDP-L-Ara4N). The modified arabinose is attached to lipid A and is required for resistance to polymyxin and cationic antimicrobial peptides. This is UDP-4-amino-4-deoxy-L-arabinose--oxoglutarate aminotransferase from Salmonella dublin (strain CT_02021853).